The following is a 521-amino-acid chain: GMP synthase [glutamine-hydrolyzing] (521 aa).

One can recognise a Glutamine amidotransferase type-1 domain in the interval 9 to 203 (KILILDFGSQ…ISGICQCEKN (195 aa)). The Nucleophile role is filled by Cys-86. Residues His-177 and Glu-179 contribute to the active site. A GMPS ATP-PPase domain is found at 204–396 (WTTDNIIAKL…LSIPPHIIYR (193 aa)). 231-237 (SGGVDSL) is an ATP binding site.

As to quaternary structure, homodimer.

It carries out the reaction XMP + L-glutamine + ATP + H2O = GMP + L-glutamate + AMP + diphosphate + 2 H(+). It participates in purine metabolism; GMP biosynthesis; GMP from XMP (L-Gln route): step 1/1. Catalyzes the synthesis of GMP from XMP. The protein is GMP synthase [glutamine-hydrolyzing] of Ruthia magnifica subsp. Calyptogena magnifica.